We begin with the raw amino-acid sequence, 358 residues long: UDP-N-acetylglucosamine--N-acetylmuramyl-(pentapeptide) pyrophosphoryl-undecaprenol N-acetylglucosamine transferase (358 aa).

UDP-N-acetyl-alpha-D-glucosamine-binding positions include 12–14 (TGG), asparagine 124, arginine 162, serine 185, isoleucine 242, 261–266 (ALTVSE), and glutamine 287.

The protein belongs to the glycosyltransferase 28 family. MurG subfamily.

It is found in the cell inner membrane. It catalyses the reaction di-trans,octa-cis-undecaprenyl diphospho-N-acetyl-alpha-D-muramoyl-L-alanyl-D-glutamyl-meso-2,6-diaminopimeloyl-D-alanyl-D-alanine + UDP-N-acetyl-alpha-D-glucosamine = di-trans,octa-cis-undecaprenyl diphospho-[N-acetyl-alpha-D-glucosaminyl-(1-&gt;4)]-N-acetyl-alpha-D-muramoyl-L-alanyl-D-glutamyl-meso-2,6-diaminopimeloyl-D-alanyl-D-alanine + UDP + H(+). Its pathway is cell wall biogenesis; peptidoglycan biosynthesis. Its function is as follows. Cell wall formation. Catalyzes the transfer of a GlcNAc subunit on undecaprenyl-pyrophosphoryl-MurNAc-pentapeptide (lipid intermediate I) to form undecaprenyl-pyrophosphoryl-MurNAc-(pentapeptide)GlcNAc (lipid intermediate II). The sequence is that of UDP-N-acetylglucosamine--N-acetylmuramyl-(pentapeptide) pyrophosphoryl-undecaprenol N-acetylglucosamine transferase from Pseudoalteromonas translucida (strain TAC 125).